A 415-amino-acid polypeptide reads, in one-letter code: Dynein assembly factor with WD repeat domains 1 (415 aa).

WD repeat units follow at residues 90–129 (AHIL…ELNT), 132–174 (GHRN…HTFR), 175–214 (GHTA…EVCT), 217–256 (GHSA…KVNI), 259–298 (GHCA…CVAT), 301–340 (GHDD…CIAK), 343–384 (GHEG…QVLE), and 386–415 (HTDE…RIWR).

The protein belongs to the WD repeat WDR69 family. Interacts with IFT46.

It localises to the cytoplasm. Its subcellular location is the cytoskeleton. It is found in the flagellum basal body. The protein localises to the flagellum axoneme. Functionally, required for axonemal dynein assembly and ciliary motility in ciliated organs, including Kupffer's vesicle, during embryogenesis. Facilitates the onset of robust cilia motility during development. The chain is Dynein assembly factor with WD repeat domains 1 (DAW1) from Macaca fascicularis (Crab-eating macaque).